A 367-amino-acid polypeptide reads, in one-letter code: o-succinylbenzoate synthase (367 aa).

The active-site Proton donor is Lys164. Mg(2+) is bound by residues Asp189, Glu214, and Asp239. Lys263 (proton acceptor) is an active-site residue.

The protein belongs to the mandelate racemase/muconate lactonizing enzyme family. MenC type 2 subfamily. Homodimer. A divalent metal cation is required as a cofactor.

The catalysed reaction is (1R,6R)-6-hydroxy-2-succinyl-cyclohexa-2,4-diene-1-carboxylate = 2-succinylbenzoate + H2O. Its pathway is quinol/quinone metabolism; 1,4-dihydroxy-2-naphthoate biosynthesis; 1,4-dihydroxy-2-naphthoate from chorismate: step 4/7. It participates in quinol/quinone metabolism; menaquinone biosynthesis. Functionally, converts 2-succinyl-6-hydroxy-2,4-cyclohexadiene-1-carboxylate (SHCHC) to 2-succinylbenzoate (OSB). Also acts as a N-succinylamino acid racemase (NSAR) that catalyzes the racemization of N-succinyl-L-phenylglycine. Since the gene is encoded in a menaquinone synthesis operon, OSB synthase is probably the physiological activity. A pathway that requires NSAR activity has not been identified in this species, so whether NSAR is also a biological activity is unknown. The chain is o-succinylbenzoate synthase from Enterococcus faecalis (strain ATCC 700802 / V583).